The sequence spans 75 residues: Serine rich endogenous peptide 4 (75 aa).

The first 31 residues, methionine 1–alanine 31, serve as a signal peptide directing secretion. The disordered stretch occupies residues proline 51 to proline 75. The SCOOP motif motif lies at proline 61 to proline 75. The SxS motif essential for MIK2 binding signature appears at serine 67–serine 69.

It belongs to the serine rich endogenous peptide (SCOOP) phytocytokine family. As to quaternary structure, interacts with MIK2 (via extracellular leucine-rich repeat domain); this interaction triggers the formation of complex between MIK2 and the BAK1/SERK3 and SERK4 coreceptors, and subsequent BAK1 activation by phosphorylation. Mostly expressed in leaves and seedlings shoots, and, to a lower extent, in roots, stems, siliques, seeds and flowers.

It is found in the cell membrane. It localises to the secreted. Its subcellular location is the extracellular space. The protein resides in the apoplast. In terms of biological role, brassicaceae-specific phytocytokine (plant endogenous peptide released into the apoplast) perceived by MIK2 in a BAK1/SERK3 and SERK4 coreceptors-dependent manner, that modulates various physiological and antimicrobial processes including growth prevention and reactive oxygen species (ROS) response regulation. Inhibits root growth. Prevents general growth and development. Exhibits antibacterial effects against Pseudomonas syringae pv. tomato DC3000, Ralstonia solanacearum, Bacillus subtilis and Agrobacterium tumefaciens, thus being an antimicrobial peptide (AMP). The protein is Serine rich endogenous peptide 4 of Arabidopsis thaliana (Mouse-ear cress).